We begin with the raw amino-acid sequence, 351 residues long: Ribosomal RNA small subunit methyltransferase H (351 aa).

Residues Gly48–Tyr50, Asp67, Phe94, Asp115, and Gln122 each bind S-adenosyl-L-methionine. Residues Ala274–Arg351 form a disordered region.

It belongs to the methyltransferase superfamily. RsmH family.

It is found in the cytoplasm. It carries out the reaction cytidine(1402) in 16S rRNA + S-adenosyl-L-methionine = N(4)-methylcytidine(1402) in 16S rRNA + S-adenosyl-L-homocysteine + H(+). Specifically methylates the N4 position of cytidine in position 1402 (C1402) of 16S rRNA. The chain is Ribosomal RNA small subunit methyltransferase H from Methylorubrum extorquens (strain PA1) (Methylobacterium extorquens).